The following is a 192-amino-acid chain: Xanthine phosphoribosyltransferase (192 aa).

Positions 20 and 27 each coordinate xanthine. A 5-phospho-alpha-D-ribose 1-diphosphate-binding site is contributed by 128 to 132; sequence ANGQA. Lys156 provides a ligand contact to xanthine.

The protein belongs to the purine/pyrimidine phosphoribosyltransferase family. Xpt subfamily. In terms of assembly, homodimer.

It localises to the cytoplasm. It carries out the reaction XMP + diphosphate = xanthine + 5-phospho-alpha-D-ribose 1-diphosphate. The protein operates within purine metabolism; XMP biosynthesis via salvage pathway; XMP from xanthine: step 1/1. Converts the preformed base xanthine, a product of nucleic acid breakdown, to xanthosine 5'-monophosphate (XMP), so it can be reused for RNA or DNA synthesis. This Ligilactobacillus salivarius (strain UCC118) (Lactobacillus salivarius) protein is Xanthine phosphoribosyltransferase.